Reading from the N-terminus, the 385-residue chain is MLSSYSSFPERSKGRLFLEKEDPQRDCYQRDRDRLIHSSAFRRLMYKTQVFSHCGDDHYRTRLTHSLEVAQIARSIARLLGLNEDLTETIALAHDIGHPPFAHIGEEALQEVAAEHYRFEHNAQVLRILGEFEHQYMDFDGLNLTWETIEGLAKHNGPIQEPHQIIEEYNGLLDLELNKQPSLEAQIVSLADDIAYSSHDIDDGLLSGVITYQDLRHLPIIGENILKFEKTFPEASKSQVMYKARRRMIRFLIYDVVDVARENIKRYLLKTVDDIRELGFPAANFSEKVGKEMKEIKAFLYNNLYFYYSIRKSRVKLKRIVKELFEVFFHDPQCLPKDYYERFRIADSMNKKAQLVCDFIANLTDSSAIREHRQFFSTCVLERDY.

The HD domain occupies 62 to 197 (RLTHSLEVAQ…VSLADDIAYS (136 aa)).

The protein belongs to the dGTPase family. Type 2 subfamily.

The sequence is that of Deoxyguanosinetriphosphate triphosphohydrolase-like protein from Neorickettsia sennetsu (strain ATCC VR-367 / Miyayama) (Ehrlichia sennetsu).